The following is a 163-amino-acid chain: Phosphopantetheine adenylyltransferase (163 aa).

S9 contacts substrate. Residues 9 to 10 and H17 contribute to the ATP site; that span reads SF. Residues K41, L73, and K87 each contribute to the substrate site. Residues 88-90, E98, and 124-130 contribute to the ATP site; these read GLR and YTYVSST.

This sequence belongs to the bacterial CoaD family. Homohexamer. Requires Mg(2+) as cofactor.

It is found in the cytoplasm. The catalysed reaction is (R)-4'-phosphopantetheine + ATP + H(+) = 3'-dephospho-CoA + diphosphate. It participates in cofactor biosynthesis; coenzyme A biosynthesis; CoA from (R)-pantothenate: step 4/5. Functionally, reversibly transfers an adenylyl group from ATP to 4'-phosphopantetheine, yielding dephospho-CoA (dPCoA) and pyrophosphate. The sequence is that of Phosphopantetheine adenylyltransferase from Fusobacterium nucleatum subsp. nucleatum (strain ATCC 25586 / DSM 15643 / BCRC 10681 / CIP 101130 / JCM 8532 / KCTC 2640 / LMG 13131 / VPI 4355).